Reading from the N-terminus, the 429-residue chain is Serine--tRNA ligase (429 aa).

235–237 (TAE) provides a ligand contact to L-serine. Residue 266–268 (RSE) coordinates ATP. Residue E289 participates in L-serine binding. Residue 353-356 (EISS) coordinates ATP. S389 provides a ligand contact to L-serine.

Belongs to the class-II aminoacyl-tRNA synthetase family. Type-1 seryl-tRNA synthetase subfamily. As to quaternary structure, homodimer. The tRNA molecule binds across the dimer.

The protein resides in the cytoplasm. The enzyme catalyses tRNA(Ser) + L-serine + ATP = L-seryl-tRNA(Ser) + AMP + diphosphate + H(+). It carries out the reaction tRNA(Sec) + L-serine + ATP = L-seryl-tRNA(Sec) + AMP + diphosphate + H(+). It participates in aminoacyl-tRNA biosynthesis; selenocysteinyl-tRNA(Sec) biosynthesis; L-seryl-tRNA(Sec) from L-serine and tRNA(Sec): step 1/1. In terms of biological role, catalyzes the attachment of serine to tRNA(Ser). Is also able to aminoacylate tRNA(Sec) with serine, to form the misacylated tRNA L-seryl-tRNA(Sec), which will be further converted into selenocysteinyl-tRNA(Sec). This Haemophilus influenzae (strain PittEE) protein is Serine--tRNA ligase.